Reading from the N-terminus, the 84-residue chain is Toxin BmKaTx16 (84 aa).

The N-terminal stretch at 1–19 is a signal peptide; that stretch reads MNYLVMISFALLLMTGVES. Positions 21–83 constitute an LCN-type CS-alpha/beta domain; it reads RDAYIAKPHN…VPIRVPGKCH (63 aa). 4 cysteine pairs are disulfide-bonded: Cys31/Cys82, Cys35/Cys55, Cys41/Cys65, and Cys45/Cys67. Residue Arg84 is a propeptide, removed by a carboxypeptidase.

This sequence belongs to the long (4 C-C) scorpion toxin superfamily. Sodium channel inhibitor family. Alpha subfamily. As to expression, expressed by the venom gland.

The protein resides in the secreted. In terms of biological role, alpha toxins bind voltage-independently at site-3 of sodium channels (Nav) and inhibit the inactivation of the activated channels, thereby blocking neuronal transmission. The chain is Toxin BmKaTx16 from Olivierus martensii (Manchurian scorpion).